The following is a 1396-amino-acid chain: ATP-dependent helicase/nuclease subunit A (1396 aa).

A disordered region spans residues 1 to 25 (MNREALCHDDPIGHDRLRPDSIPRD). The region spanning 26–532 (PKWTDEQWQA…IDLAKNFRSR (507 aa)) is the UvrD-like helicase ATP-binding domain. 47–54 (AAAGAGKT) is a binding site for ATP. 2 disordered regions span residues 590 to 649 (DADG…GQPT) and 1171 to 1205 (HSPETPPSSETPPSLEIPPSLETPPSLETQTPSPD). Residues 615–920 (HKNIAKAGES…RIMSIHKSKG (306 aa)) form the UvrD-like helicase C-terminal domain. A compositionally biased stretch (low complexity) spans 1181 to 1199 (TPPSLEIPPSLETPPSLET).

The protein belongs to the helicase family. AddA subfamily. As to quaternary structure, heterodimer of AddA and AddB/RexB. Mg(2+) is required as a cofactor.

The catalysed reaction is Couples ATP hydrolysis with the unwinding of duplex DNA by translocating in the 3'-5' direction.. The enzyme catalyses ATP + H2O = ADP + phosphate + H(+). Functionally, the heterodimer acts as both an ATP-dependent DNA helicase and an ATP-dependent, dual-direction single-stranded exonuclease. Recognizes the chi site generating a DNA molecule suitable for the initiation of homologous recombination. The AddA nuclease domain is required for chi fragment generation; this subunit has the helicase and 3' -&gt; 5' nuclease activities. This chain is ATP-dependent helicase/nuclease subunit A, found in Heliobacterium modesticaldum (strain ATCC 51547 / Ice1).